Reading from the N-terminus, the 309-residue chain is Olfactory receptor 5B2 (309 aa).

At 1–23 (MENCTEVTKFILLGLTSVPELQI) the chain is on the extracellular side. Residue Asn-3 is glycosylated (N-linked (GlcNAc...) asparagine). Residues 24 to 47 (PLFILFTFIYLLTLCGNLGMMLLI) traverse the membrane as a helical segment. Topologically, residues 48–55 (LMDSCLHT) are cytoplasmic. Residues 56-77 (PMYFFLSNLSLVDFGYSSAVTP) traverse the membrane as a helical segment. At 78 to 98 (KVMAGFLRGDKVISYNACAVQ) the chain is on the extracellular side. A disulfide bridge connects residues Cys-95 and Cys-187. Residues 99–118 (MFFFVALATVENYLLASMAY) traverse the membrane as a helical segment. The Cytoplasmic segment spans residues 119 to 137 (DRYAAVCKPLHYTTTMTAS). Residues 138 to 156 (VGACLALGSYVCGFLNASF) form a helical membrane-spanning segment. The Extracellular segment spans residues 157–193 (HIGGIFSLSFCKSNLVHHFFCDVPAVMALSCSDKHTS). A helical membrane pass occupies residues 194–217 (EVILVFMSSFNIFFVLLVIFISYL). Topologically, residues 218 to 234 (FIFITILKMHSAKGHQK) are cytoplasmic. Residues 235–257 (ALSTCASHFTAVSVFYGTVIFIY) traverse the membrane as a helical segment. Topologically, residues 258–270 (LQPSSSHSMDTDK) are extracellular. A helical transmembrane segment spans residues 271-290 (MASVFYAMIIPMLNPVVYSL). The Cytoplasmic segment spans residues 291 to 309 (RNREVQNAFKKVLRRQKFL).

Belongs to the G-protein coupled receptor 1 family.

Its subcellular location is the cell membrane. Its function is as follows. Odorant receptor. The chain is Olfactory receptor 5B2 (OR5B2) from Homo sapiens (Human).